Consider the following 475-residue polypeptide: Ribulose bisphosphate carboxylase large chain (475 aa).

Residues 1–2 (MS) constitute a propeptide that is removed on maturation. An N-acetylproline modification is found at proline 3. Residues asparagine 123 and threonine 173 each coordinate substrate. The Proton acceptor role is filled by lysine 175. Lysine 177 contributes to the substrate binding site. The Mg(2+) site is built by lysine 201, aspartate 203, and glutamate 204. Position 201 is an N6-carboxylysine (lysine 201). Histidine 294 serves as the catalytic Proton acceptor. Substrate is bound by residues arginine 295, histidine 327, and serine 379.

It belongs to the RuBisCO large chain family. Type I subfamily. In terms of assembly, heterohexadecamer of 8 large chains and 8 small chains; disulfide-linked. The disulfide link is formed within the large subunit homodimers. The cofactor is Mg(2+). Post-translationally, the disulfide bond which can form in the large chain dimeric partners within the hexadecamer appears to be associated with oxidative stress and protein turnover.

It localises to the plastid. The protein resides in the chloroplast. It catalyses the reaction 2 (2R)-3-phosphoglycerate + 2 H(+) = D-ribulose 1,5-bisphosphate + CO2 + H2O. The catalysed reaction is D-ribulose 1,5-bisphosphate + O2 = 2-phosphoglycolate + (2R)-3-phosphoglycerate + 2 H(+). RuBisCO catalyzes two reactions: the carboxylation of D-ribulose 1,5-bisphosphate, the primary event in carbon dioxide fixation, as well as the oxidative fragmentation of the pentose substrate in the photorespiration process. Both reactions occur simultaneously and in competition at the same active site. The sequence is that of Ribulose bisphosphate carboxylase large chain from Gnetum parvifolium (Small-leaved jointfir).